A 57-amino-acid chain; its full sequence is Large ribosomal subunit protein bL32 (57 aa).

Belongs to the bacterial ribosomal protein bL32 family.

The sequence is that of Large ribosomal subunit protein bL32 from Geobacillus sp. (strain WCH70).